A 462-amino-acid polypeptide reads, in one-letter code: 7-hydroxymethyl chlorophyll a reductase, chloroplastic (462 aa).

The transit peptide at 1–20 (MITVVTSRLSLLPPVFSVVN) directs the protein to the chloroplast.

The protein belongs to the FrhB family. As to quaternary structure, interacts with SGR1, the chlorophyll catabolic enzymes (CCEs) NYC1, NOL and RCCR, and the LHCII complex. Part of a SGR1-CCE-LHCII complex, which acts in chlorophyll breakdown. FAD is required as a cofactor. Requires iron-sulfur cluster as cofactor.

The protein localises to the plastid. Its subcellular location is the chloroplast. It carries out the reaction chlorophyll a + 2 oxidized [2Fe-2S]-[ferredoxin] + H2O = 7(1)-hydroxychlorophyll a + 2 reduced [2Fe-2S]-[ferredoxin] + 2 H(+). Its function is as follows. Probable iron-sulfur flavoprotein that converts 7-hydroxymethyl chlorophyll a to chlorophyll a using ferredoxin as a reducing equivalent. Catalyzes the reduction of a hydroxymethyl group to a methyl group. Belongs to the chlorophyll catabolic enzymes (CCEs). The chain is 7-hydroxymethyl chlorophyll a reductase, chloroplastic (HCAR) from Arabidopsis thaliana (Mouse-ear cress).